Here is a 221-residue protein sequence, read N- to C-terminus: Triosephosphate isomerase (221 aa).

Position 8 to 10 (8 to 10 (NLK)) interacts with substrate. His92 acts as the Electrophile in catalysis. The Proton acceptor role is filled by Glu140. Residues Ile145, Gly180, and 201–202 (AS) each bind substrate.

The protein belongs to the triosephosphate isomerase family. As to quaternary structure, homotetramer; dimer of dimers.

It localises to the cytoplasm. The catalysed reaction is D-glyceraldehyde 3-phosphate = dihydroxyacetone phosphate. It participates in carbohydrate biosynthesis; gluconeogenesis. Its pathway is carbohydrate degradation; glycolysis; D-glyceraldehyde 3-phosphate from glycerone phosphate: step 1/1. Involved in the gluconeogenesis. Catalyzes stereospecifically the conversion of dihydroxyacetone phosphate (DHAP) to D-glyceraldehyde-3-phosphate (G3P). In Methanococcoides burtonii (strain DSM 6242 / NBRC 107633 / OCM 468 / ACE-M), this protein is Triosephosphate isomerase.